The following is an 83-amino-acid chain: ATP synthase subunit c (83 aa).

The next 2 helical transmembrane spans lie at 10-30 and 52-72; these read IAVA…FGLL and MFIV…IALF.

This sequence belongs to the ATPase C chain family. As to quaternary structure, F-type ATPases have 2 components, F(1) - the catalytic core - and F(0) - the membrane proton channel. F(1) has five subunits: alpha(3), beta(3), gamma(1), delta(1), epsilon(1). F(0) has three main subunits: a(1), b(2) and c(10-14). The alpha and beta chains form an alternating ring which encloses part of the gamma chain. F(1) is attached to F(0) by a central stalk formed by the gamma and epsilon chains, while a peripheral stalk is formed by the delta and b chains.

Its subcellular location is the cell inner membrane. F(1)F(0) ATP synthase produces ATP from ADP in the presence of a proton or sodium gradient. F-type ATPases consist of two structural domains, F(1) containing the extramembraneous catalytic core and F(0) containing the membrane proton channel, linked together by a central stalk and a peripheral stalk. During catalysis, ATP synthesis in the catalytic domain of F(1) is coupled via a rotary mechanism of the central stalk subunits to proton translocation. Its function is as follows. Key component of the F(0) channel; it plays a direct role in translocation across the membrane. A homomeric c-ring of between 10-14 subunits forms the central stalk rotor element with the F(1) delta and epsilon subunits. This chain is ATP synthase subunit c, found in Shewanella loihica (strain ATCC BAA-1088 / PV-4).